The sequence spans 133 residues: uncharacterized protein (133 aa).

This is an uncharacterized protein from Caenorhabditis elegans.